The following is a 2545-amino-acid chain: uncharacterized protein (2545 aa).

The helical transmembrane segment at 17–37 (INFSITFIFINILLVFFSTFL) threads the bilayer. Residues 131-161 (LENIKQELHIIDRELKNILQKEENLQLINEE) are a coiled coil. Disordered regions lie at residues 348-462 (NVNQ…PKKT), 587-616 (NHNMQRENTREDPSNNMDYTNKSTSDSNDI), and 1214-1238 (RNSSYNKKERDSKKDRDSVYDENRR). Composition is skewed to basic and acidic residues over residues 354–371 (SSDHKKESFKIDTKKNDQ), 380–391 (KNEKNEENEKNG), and 401–413 (QNGKNEQNGKNEQ). Low complexity predominate over residues 414–435 (NEQNDQIEQNYQNDPNDQNDQN). Composition is skewed to basic and acidic residues over residues 437–454 (QNEKNDQNEKNDQNKKNE) and 590–599 (MQRENTREDP). A compositionally biased stretch (polar residues) spans 600–613 (SNNMDYTNKSTSDS). The span at 1219 to 1238 (NKKERDSKKDRDSVYDENRR) shows a compositional bias: basic and acidic residues. Positions 2303-2337 (KEKYKFQMNMKDSEINQLQNNLIDEFKELNEVSKL) form a coiled coil.

The protein localises to the membrane. This is an uncharacterized protein from Plasmodium falciparum (isolate 3D7).